The following is a 103-amino-acid chain: ATP synthase subunit H, mitochondrial (103 aa).

A mitochondrion-targeting transit peptide spans 1-26 (MSRILKSLSRSYSTTSPRLYVDVVQG).

This sequence belongs to the ATPase h subunit family. As to quaternary structure, F-type ATPases have 2 components, CF(1) - the catalytic core - and CF(0) - the membrane proton channel.

The protein localises to the mitochondrion. It is found in the mitochondrion inner membrane. In terms of biological role, mitochondrial membrane ATP synthase (F(1)F(0) ATP synthase or Complex V) produces ATP from ADP in the presence of a proton gradient across the membrane which is generated by electron transport complexes of the respiratory chain. F-type ATPases consist of two structural domains, F(1) - containing the extramembraneous catalytic core and F(0) - containing the membrane proton channel, linked together by a central stalk and a peripheral stalk. During catalysis, ATP synthesis in the catalytic domain of F(1) is coupled via a rotary mechanism of the central stalk subunits to proton translocation. Part of the complex F(0) domain. Minor subunit located with subunit a in the membrane. This Schizosaccharomyces pombe (strain 972 / ATCC 24843) (Fission yeast) protein is ATP synthase subunit H, mitochondrial (atp14).